The sequence spans 126 residues: Methylglyoxal synthase (126 aa).

The MGS-like domain maps to 1 to 126 (MAGGKCIALI…AERLIKTLNH (126 aa)). Substrate-binding positions include H12, K16, 38-41 (TGTT), and 59-60 (SG). D65 acts as the Proton donor/acceptor in catalysis. Residue H92 coordinates substrate.

It belongs to the methylglyoxal synthase family.

The enzyme catalyses dihydroxyacetone phosphate = methylglyoxal + phosphate. Functionally, catalyzes the formation of methylglyoxal from dihydroxyacetone phosphate. This is Methylglyoxal synthase from Rhizobium rhizogenes (strain K84 / ATCC BAA-868) (Agrobacterium radiobacter).